We begin with the raw amino-acid sequence, 491 residues long: Galactose-1-phosphate uridylyltransferase 1 (491 aa).

Belongs to the galactose-1-phosphate uridylyltransferase type 2 family.

It localises to the cytoplasm. It catalyses the reaction alpha-D-galactose 1-phosphate + UDP-alpha-D-glucose = alpha-D-glucose 1-phosphate + UDP-alpha-D-galactose. It participates in carbohydrate metabolism; galactose metabolism. The chain is Galactose-1-phosphate uridylyltransferase 1 (galT1) from Streptococcus pneumoniae serotype 4 (strain ATCC BAA-334 / TIGR4).